The chain runs to 366 residues: Ribosomal RNA large subunit methyltransferase M (366 aa).

S-adenosyl-L-methionine contacts are provided by residues Ser-188, 221–224 (CPGG), Asp-240, Asp-260, and Asp-277. The active-site Proton acceptor is the Lys-306.

It belongs to the class I-like SAM-binding methyltransferase superfamily. RNA methyltransferase RlmE family. RlmM subfamily. In terms of assembly, monomer.

The protein localises to the cytoplasm. It catalyses the reaction cytidine(2498) in 23S rRNA + S-adenosyl-L-methionine = 2'-O-methylcytidine(2498) in 23S rRNA + S-adenosyl-L-homocysteine + H(+). Functionally, catalyzes the 2'-O-methylation at nucleotide C2498 in 23S rRNA. The polypeptide is Ribosomal RNA large subunit methyltransferase M (Shigella boydii serotype 4 (strain Sb227)).